A 509-amino-acid chain; its full sequence is Maturase K (509 aa).

Belongs to the intron maturase 2 family. MatK subfamily.

Its subcellular location is the plastid. The protein localises to the chloroplast. Usually encoded in the trnK tRNA gene intron. Probably assists in splicing its own and other chloroplast group II introns. The chain is Maturase K from Abies firma (Momi fir).